Consider the following 495-residue polypeptide: WD repeat-containing protein 37 (495 aa).

Polar residues-rich tracts occupy residues 1–13 (MPTESASCSTARQ) and 22–31 (SLSIRRTNSS). The tract at residues 1 to 50 (MPTESASCSTARQTKQKRKSHSLSIRRTNSSEQERTGLPRDMLEGQDSKL) is disordered. Over residues 32–47 (EQERTGLPRDMLEGQD) the composition is skewed to basic and acidic residues. WD repeat units lie at residues 154–194 (GHRD…CLVK) and 197–236 (GHVGSVNSIKFHPSEQLALTASGDQTAHIWRYAVQLPTPQ). The disordered stretch occupies residues 237–266 (PVADTSQISGEDEVECSDKDEPDLDGDVSS). Acidic residues predominate over residues 246–264 (GEDEVECSDKDEPDLDGDV). 5 WD repeats span residues 280–319 (SHQGVVIAADWLVGGKQAVTASWDRTANLYDVETSELVHS), 322–361 (GHDQELTHCCTHPTQRLVVTSSRDTTFRLWDFRDPSIHSV), 366–404 (GHTDTVTSAVFTVGDNVVSGSDDRTVKVWDLKNMRSPIA), 407–446 (RTDSAINRINVCVGQKIIALPHDNRQVRLFDMSGVRLARL), and 453–494 (GHRR…LLQE).

Forms homodimers. Interacts with PACS1. Interacts with PACS2.

It is found in the cytoplasm. The protein localises to the nucleus. Functionally, required for normal ER Ca2+ handling in lymphocytes. Together with PACS1, it plays an essential role in stabilizing peripheral lymphocyte populations. The polypeptide is WD repeat-containing protein 37 (WDR37) (Pongo abelii (Sumatran orangutan)).